Reading from the N-terminus, the 654-residue chain is Macrolide export ATP-binding/permease protein MacB (654 aa).

One can recognise an ABC transporter domain in the interval 6-244 (IEISALNRIF…TSASSATDAA (239 aa)). 42 to 49 (GTSGSGKS) contacts ATP. 4 consecutive transmembrane segments (helical) span residues 279-299 (LLTM…VAIG), 534-554 (IAVI…LVSV), 584-604 (MVCL…GALF), and 617-637 (VTAI…FGFL).

It belongs to the ABC transporter superfamily. Macrolide exporter (TC 3.A.1.122) family. As to quaternary structure, homodimer. Part of the tripartite efflux system MacAB-TolC, which is composed of an inner membrane transporter, MacB, a periplasmic membrane fusion protein, MacA, and an outer membrane component, TolC. The complex forms a large protein conduit and can translocate molecules across both the inner and outer membranes. Interacts with MacA.

The protein resides in the cell inner membrane. Part of the tripartite efflux system MacAB-TolC. MacB is a non-canonical ABC transporter that contains transmembrane domains (TMD), which form a pore in the inner membrane, and an ATP-binding domain (NBD), which is responsible for energy generation. Confers resistance against macrolides. This Hahella chejuensis (strain KCTC 2396) protein is Macrolide export ATP-binding/permease protein MacB.